The following is a 337-amino-acid chain: Glyceraldehyde-3-phosphate dehydrogenase 3, cytosolic (337 aa).

NAD(+) is bound by residues 13-14 (RI), Asp35, and Arg82. Residues 153-155 (SCT), Thr184, 213-214 (TG), and Arg236 each bind D-glyceraldehyde 3-phosphate. The Nucleophile role is filled by Cys154. Asn318 contributes to the NAD(+) binding site.

Belongs to the glyceraldehyde-3-phosphate dehydrogenase family. As to quaternary structure, homotetramer.

The protein localises to the cytoplasm. The catalysed reaction is D-glyceraldehyde 3-phosphate + phosphate + NAD(+) = (2R)-3-phospho-glyceroyl phosphate + NADH + H(+). It functions in the pathway carbohydrate degradation; glycolysis; pyruvate from D-glyceraldehyde 3-phosphate: step 1/5. In terms of biological role, key enzyme in glycolysis that catalyzes the first step of the pathway by converting D-glyceraldehyde 3-phosphate (G3P) into 3-phospho-D-glyceroyl phosphate. Essential for the maintenance of cellular ATP levels and carbohydrate metabolism. This is Glyceraldehyde-3-phosphate dehydrogenase 3, cytosolic (GAPC3) from Oryza sativa subsp. japonica (Rice).